The chain runs to 164 residues: Phosphopantetheine adenylyltransferase (164 aa).

Residue serine 9 participates in substrate binding. Residues 9–10 (SF) and histidine 17 each bind ATP. Substrate is bound by residues lysine 41, leucine 73, and lysine 87. ATP is bound by residues 88 to 90 (GLR), glutamate 98, and 123 to 129 (YSYISSS).

The protein belongs to the bacterial CoaD family. As to quaternary structure, homohexamer. The cofactor is Mg(2+).

The protein localises to the cytoplasm. It catalyses the reaction (R)-4'-phosphopantetheine + ATP + H(+) = 3'-dephospho-CoA + diphosphate. The protein operates within cofactor biosynthesis; coenzyme A biosynthesis; CoA from (R)-pantothenate: step 4/5. Functionally, reversibly transfers an adenylyl group from ATP to 4'-phosphopantetheine, yielding dephospho-CoA (dPCoA) and pyrophosphate. This is Phosphopantetheine adenylyltransferase from Clostridium perfringens (strain SM101 / Type A).